We begin with the raw amino-acid sequence, 819 residues long: Transferrin 2 (819 aa).

Positions 1 to 21 are cleaved as a signal peptide; the sequence is MASSLVFVALVGALCFTLANA. The Transferrin-like 1 domain occupies 33-373; sequence MVWCTKSQAE…QYDQYRSERL (341 aa). Cystine bridges form between Cys36-Cys78 and Cys46-Cys69. Asn48 and Asn66 each carry an N-linked (GlcNAc...) asparagine glycan. Positions 93 and 121 each coordinate Fe(3+). Cystine bridges form between Cys147–Cys237, Cys190–Cys213, and Cys273–Cys287. 2 residues coordinate hydrogencarbonate: Ala155 and Gly156. Asn187 carries an N-linked (GlcNAc...) asparagine glycan. Tyr231 is a binding site for Fe(3+). Residues 325-361 form a disordered region; it reads GTRDDQSRQGGQSFNSRNNINDQNAYGQFDNNDPYRT. Residues 332-361 are compositionally biased toward polar residues; that stretch reads RQGGQSFNSRNNINDQNAYGQFDNNDPYRT. Asn388 carries N-linked (GlcNAc...) asparagine glycosylation. Residues 450-796 enclose the Transferrin-like 2 domain; that stretch reads MTLCVTSENE…FMRARRITDC (347 aa). Intrachain disulfides connect Cys453–Cys490 and Cys463–Cys481. Fe(3+) contacts are provided by Asp505 and Tyr533. 4 cysteine pairs are disulfide-bonded: Cys557–Cys646, Cys599–Cys621, Cys618–Cys629, and Cys687–Cys701. Thr559, Ala565, and Gly566 together coordinate hydrogencarbonate. A glycan (N-linked (GlcNAc...) asparagine) is linked at Asn720. Cys796 is lipidated: GPI-anchor amidated cysteine. A propeptide spans 797-819 (removed in mature form); that stretch reads YAGASQLALSVGLLLVGSLVAML.

This sequence belongs to the transferrin family. As to quaternary structure, forms a complex composed of septa junction proteins Nrx-IV/Nrx, Tsf2/MTf, Cont and Nrg during late embryogenesis.

The protein localises to the apicolateral cell membrane. The protein resides in the cell junction. It is found in the septate junction. Iron-binding protein and component of septate junctions that form the paracellular permeability barrier in epithelial tissues. In an iron-dependent manner, required for septate junction assembly during epithelial maturation in embryos and mature septa junctions stability. The sequence is that of Transferrin 2 from Drosophila melanogaster (Fruit fly).